The primary structure comprises 62 residues: Large ribosomal subunit protein uL30 (62 aa).

It belongs to the universal ribosomal protein uL30 family. As to quaternary structure, part of the 50S ribosomal subunit.

In Geobacillus thermodenitrificans (strain NG80-2), this protein is Large ribosomal subunit protein uL30.